The sequence spans 570 residues: Rqc2 homolog RqcH (570 aa).

Positions 1–173 (MSFDGMFTYG…LPPAQDKISP (173 aa)) are NFACT-N domain. Residues 179–281 (DDILRHLSFQ…ELLDRFYFGK (103 aa)) form a hhH domain region. Coiled-coil stretches lie at residues 279–336 (FGKA…TANL) and 368–430 (TPSE…VEGK). Residues 282–434 (AERDRVKQQA…ELVEGKYLRP (153 aa)) form a coiled-coil-M (CCM) region. Positions 446 to 570 (HNPVLETYES…ADTVIKLKKS (125 aa)) are NFACT-R.

This sequence belongs to the NEMF family. As to quaternary structure, associates with isolated or stalled 50S ribosomal subunits. Binds to RqcP. Interacts with ribosomal protein uL11. Displaced from the 50S subunit by thiostrepton. In crystallized 50S subunits RqcH is variously associated with A/P-site tRNA, P-site tRNA and RqcP, an E-site tRNA or A- and P-site tRNAs and RqcP2(YlmH).

Functionally, key component of the ribosome quality control system (RQC), a ribosome-associated complex that mediates the extraction of incompletely synthesized nascent chains from stalled ribosomes and their subsequent degradation. RqcH recruits Ala-charged tRNA, and with RqcP directs the elongation of stalled nascent chains on 50S ribosomal subunits, leading to non-templated C-terminal alanine extensions (Ala tail). The Ala tail promotes nascent chain degradation. RqcH, RqcP and charged tRNA(Ala) are necessary and sufficient to add an Ala tail to a model stalled nascent peptide; does not add Val. Binds the P-site tRNA in 50S ribosomal subunit, unwinds the anticodon stem and interacts with the splayed anticodon. Selectively binds tRNA(Ala) isoacceptors, even in the absence of the 50S ribosomal subunit. Adds between 1 and at least 8 Ala residues to the nascent chain; detection of the Ala tail requires either deletion of clpP or its inhibition. Binds to 50S ribosomal subunits, at least 30% of which contain a P-site tRNA and thus are obstructed. This chain is Rqc2 homolog RqcH, found in Bacillus subtilis (strain 168).